Consider the following 94-residue polypeptide: Acylphosphatase (94 aa).

Positions 3–90 (RVHVIVEGRV…PDEKQFRIMY (88 aa)) constitute an Acylphosphatase-like domain. Residues arginine 18 and asparagine 36 contribute to the active site.

The protein belongs to the acylphosphatase family.

The enzyme catalyses an acyl phosphate + H2O = a carboxylate + phosphate + H(+). The protein is Acylphosphatase (acyP) of Geobacillus thermodenitrificans (strain NG80-2).